Consider the following 325-residue polypeptide: Prenytransferase adrG (325 aa).

Helical transmembrane passes span Leu-47–Leu-67, Met-71–Ile-91, Ala-117–Trp-137, Pro-163–Leu-183, Met-189–Ile-209, Leu-236–Thr-256, and Leu-258–Leu-278.

It belongs to the UbiA prenyltransferase family. The cofactor is Mg(2+).

It is found in the membrane. It carries out the reaction 3,5-dimethylorsellinate + (2E,6E)-farnesyl diphosphate = (3R)-3-farnesyl-6-hydroxy-2,3,5-trimethyl-4-oxocyclohexa-1,5-diene-1-carboxylate + diphosphate + H(+). The protein operates within secondary metabolite biosynthesis; terpenoid biosynthesis. Prenytransferase; part of the gene cluster that mediates the biosynthesis of andrastins, meroterpenoid compounds that exhibit inhibitory activity against ras farnesyltransferase, suggesting that they could be promising leads for antitumor agents. The first step of the pathway is the synthesis of 3,5-dimethylorsellinic acid (DMOA) by the polyketide synthase adrD via condensation of one acetyl-CoA starter unit with 3 malonyl-CoA units and 2 methylations. DMAO is then converted to farnesyl-DMAO by the prenyltransferase adrG. The methyltransferase adrK catalyzes the methylation of the carboxyl group of farnesyl-DMAO to farnesyl-DMAO methyl ester which is further converted to epoxyfarnesyl-DMAO methyl ester by the FAD-dependent monooxygenase adrH. The terpene cyclase adrI then catalyzes the carbon skeletal rearrangement to generate the andrastin E, the first compound in the pathway having the andrastin scaffold, with the tetracyclic ring system. The post-cyclization tailoring enzymes adrF, adrE, adrJ, and adrA, are involved in the conversion of andrastin E into andrastin A. The short chain dehydrogenase adrF is responsible for the oxidation of the C-3 a hydroxyl group of andrastin E to yield the corresponding ketone, andrastin D. The ketoreductase adrE stereoselectively reduces the carbonyl moiety to reverse the stereochemistry of the C-3 position to yield andrastin F. The acetyltransferase adrJ is the acetyltransferase that attaches the acetyl group to the C-3 hydroxyl group of andrastin F to yield andrastin C. Finally, the cytochrome P450 monooxygenase adrA catalyzes two sequential oxidation reactions of the C-23 methyl group, to generate the corresponding alcohol andrastin B, and aldehyde andrastin A. The protein is Prenytransferase adrG of Penicillium rubens (strain ATCC 28089 / DSM 1075 / NRRL 1951 / Wisconsin 54-1255) (Penicillium chrysogenum).